The sequence spans 289 residues: Proteasome subunit beta (289 aa).

Residues 1-55 constitute a propeptide, removed in mature form; by autocatalysis; it reads MTWPLPDRLSINSAISGSAVDLSSFAEFLRRQAPELLPASIKHGGGAVGDQLPHA. The Nucleophile role is filled by threonine 56.

The protein belongs to the peptidase T1B family. As to quaternary structure, the 20S proteasome core is composed of 14 alpha and 14 beta subunits that assemble into four stacked heptameric rings, resulting in a barrel-shaped structure. The two inner rings, each composed of seven catalytic beta subunits, are sandwiched by two outer rings, each composed of seven alpha subunits. The catalytic chamber with the active sites is on the inside of the barrel. Has a gated structure, the ends of the cylinder being occluded by the N-termini of the alpha-subunits. Is capped by the proteasome-associated ATPase, ARC.

It is found in the cytoplasm. The catalysed reaction is Cleavage of peptide bonds with very broad specificity.. Its pathway is protein degradation; proteasomal Pup-dependent pathway. The formation of the proteasomal ATPase ARC-20S proteasome complex, likely via the docking of the C-termini of ARC into the intersubunit pockets in the alpha-rings, may trigger opening of the gate for substrate entry. Interconversion between the open-gate and close-gate conformations leads to a dynamic regulation of the 20S proteasome proteolysis activity. Its function is as follows. Component of the proteasome core, a large protease complex with broad specificity involved in protein degradation. The protein is Proteasome subunit beta of Mycobacterium marinum (strain ATCC BAA-535 / M).